The primary structure comprises 221 residues: Membrane protein 0 (221 aa).

The segment at M1–G22 is disordered. The PPXY motif signature appears at P44–Y47. The helical transmembrane segment at F100–F120 threads the bilayer.

This sequence belongs to the varicellovirus ORF0 protein family. In terms of assembly, interacts with host ITCH; this interaction probably mediates ITCH degradation.

The protein resides in the host Golgi apparatus membrane. The sequence is that of Membrane protein 0 from Homo sapiens (Human).